Here is a 78-residue protein sequence, read N- to C-terminus: Large ribosomal subunit protein bL28 (78 aa).

The tract at residues 1–23 (MSRVCQVTGKRPMVGNNRSHAKN) is disordered.

The protein belongs to the bacterial ribosomal protein bL28 family.

In Shewanella pealeana (strain ATCC 700345 / ANG-SQ1), this protein is Large ribosomal subunit protein bL28.